Here is a 946-residue protein sequence, read N- to C-terminus: Protein dct-6 (946 aa).

The stretch at 326–363 (YMDMNDQIEQMIALLVDQLEELEKLEQLCDEVQKTGNQ) forms a coiled coil.

Functionally, may have a role in tumor suppression. The protein is Protein dct-6 of Caenorhabditis briggsae.